The chain runs to 251 residues: PF03932 family protein CutC (251 aa).

This sequence belongs to the CutC family.

Its subcellular location is the cytoplasm. The polypeptide is PF03932 family protein CutC (Erwinia tasmaniensis (strain DSM 17950 / CFBP 7177 / CIP 109463 / NCPPB 4357 / Et1/99)).